Here is a 327-residue protein sequence, read N- to C-terminus: uncharacterized protein (327 aa).

Positions 1-24 are cleaved as a signal peptide; sequence MKQPGFIRLATLALLSTLSFFSHG.

This is an uncharacterized protein from Salmonella typhimurium (strain LT2 / SGSC1412 / ATCC 700720).